The primary structure comprises 243 residues: 1-(5-phosphoribosyl)-5-[(5-phosphoribosylamino)methylideneamino] imidazole-4-carboxamide isomerase (243 aa).

Catalysis depends on Asp-8, which acts as the Proton acceptor. The Proton donor role is filled by Asp-129.

It belongs to the HisA/HisF family.

Its subcellular location is the cytoplasm. The catalysed reaction is 1-(5-phospho-beta-D-ribosyl)-5-[(5-phospho-beta-D-ribosylamino)methylideneamino]imidazole-4-carboxamide = 5-[(5-phospho-1-deoxy-D-ribulos-1-ylimino)methylamino]-1-(5-phospho-beta-D-ribosyl)imidazole-4-carboxamide. It functions in the pathway amino-acid biosynthesis; L-histidine biosynthesis; L-histidine from 5-phospho-alpha-D-ribose 1-diphosphate: step 4/9. The protein is 1-(5-phosphoribosyl)-5-[(5-phosphoribosylamino)methylideneamino] imidazole-4-carboxamide isomerase of Syntrophotalea carbinolica (strain DSM 2380 / NBRC 103641 / GraBd1) (Pelobacter carbinolicus).